Here is a 356-residue protein sequence, read N- to C-terminus: Heparan sulfate 2-O-sulfotransferase 1 (356 aa).

Residues Met1 to Lys11 are Cytoplasmic-facing. A helical; Signal-anchor for type II membrane protein transmembrane segment spans residues Leu12–Glu28. Residues Met24 to Arg51 adopt a coiled-coil conformation. Over Asn29–Asn356 the chain is Lumenal. Residues Lys83, Thr84, Ala85, Ser86, Thr87, and Ser88 each contribute to the adenosine 3',5'-bisphosphate site. 2 N-linked (GlcNAc...) asparagine glycosylation sites follow: Asn108 and Asn127. Residues His140 and His142 contribute to the active site. Adenosine 3',5'-bisphosphate is bound by residues Arg164 and Ser172. 2 disulfides stabilise this stretch: Cys201/Cys209 and Cys222/Cys228. Adenosine 3',5'-bisphosphate is bound by residues Tyr279, Ser285, Thr290, and Lys293.

The protein belongs to the sulfotransferase 3 family. In terms of assembly, homotrimer. Interacts with the C5-epimerase GLCE. In terms of processing, N-glycosylated.

The protein localises to the golgi apparatus membrane. Its function is as follows. Catalyzes the transfer of a sulfo group from 3'-phospho-5'-adenylyl sulfate (PAPS) to the 2-OH position of iduronic acid (IdoA) or glucuronic acid (GlcA) within the heparan sulfate (HS) chain and participates in HS biosynthesis. Required for metanephric development of kidney formation, suggesting that 2-O-sulfation within HS is essential for signaling between ureteric bud and metanephric mesenchyme. The sequence is that of Heparan sulfate 2-O-sulfotransferase 1 from Pongo abelii (Sumatran orangutan).